A 250-amino-acid polypeptide reads, in one-letter code: NAD(P)H-quinone oxidoreductase subunit K (250 aa).

Residues Cys60, Cys61, Cys125, and Cys156 each coordinate [4Fe-4S] cluster. Residues Glu230–Ser250 form a disordered region. Over residues Leu231–Ser250 the composition is skewed to polar residues.

It belongs to the complex I 20 kDa subunit family. As to quaternary structure, NDH-1 can be composed of about 15 different subunits; different subcomplexes with different compositions have been identified which probably have different functions. [4Fe-4S] cluster serves as cofactor.

It localises to the cellular thylakoid membrane. The catalysed reaction is a plastoquinone + NADH + (n+1) H(+)(in) = a plastoquinol + NAD(+) + n H(+)(out). The enzyme catalyses a plastoquinone + NADPH + (n+1) H(+)(in) = a plastoquinol + NADP(+) + n H(+)(out). Its function is as follows. NDH-1 shuttles electrons from an unknown electron donor, via FMN and iron-sulfur (Fe-S) centers, to quinones in the respiratory and/or the photosynthetic chain. The immediate electron acceptor for the enzyme in this species is believed to be plastoquinone. Couples the redox reaction to proton translocation, and thus conserves the redox energy in a proton gradient. Cyanobacterial NDH-1 also plays a role in inorganic carbon-concentration. This is NAD(P)H-quinone oxidoreductase subunit K from Prochlorococcus marinus (strain MIT 9303).